Reading from the N-terminus, the 432-residue chain is MRVVILGSGVVGVTSAWYLSQAGHDVTVIDRESGPAQGTSAANAGQISPGYAAPWAAPGVPLKAIKWMFQRHAPLAVRLDGTPFQLKWMWQMLRNCDTRHYMENKGRMVRLAEYSRDCLKTLRAETGIKYEGRQGGTLQLFRTARQYENATRDIAVLEDAGVPYQLLESSRLAEVEPALAEVAHKLTGGLRLPNDETGDCQLFTQRLAHMAEQAGVTFRFNTPVEKLLYENEQIYGVKCADEIIKADAYVMAFGSYSTAMLKGIVDIPVYPLKGYSLTIPIVEPDGAPVSTILDETYKIAITRFDKRIRVGGMAEIVGFNTDLQQPRRETLEMVVRDLFPRGGRIEQATFWTGLRPMTPDGTPVVGRTRFKNLWLNTGHGTLGWTMACGSGQLLSDILSGRTPAIPYDDLSIARYRSDFAPSRQQRLHSAHN.

3–17 (VVILGSGVVGVTSAW) contributes to the FAD binding site.

It belongs to the DadA oxidoreductase family. Requires FAD as cofactor.

It carries out the reaction a D-alpha-amino acid + A + H2O = a 2-oxocarboxylate + AH2 + NH4(+). Its pathway is amino-acid degradation; D-alanine degradation; NH(3) and pyruvate from D-alanine: step 1/1. Oxidative deamination of D-amino acids. This is D-amino acid dehydrogenase from Salmonella arizonae (strain ATCC BAA-731 / CDC346-86 / RSK2980).